Consider the following 142-residue polypeptide: 3-hydroxyacyl-[acyl-carrier-protein] dehydratase FabZ (142 aa).

The active site involves His-48.

Belongs to the thioester dehydratase family. FabZ subfamily.

It is found in the cytoplasm. The catalysed reaction is a (3R)-hydroxyacyl-[ACP] = a (2E)-enoyl-[ACP] + H2O. In terms of biological role, involved in unsaturated fatty acids biosynthesis. Catalyzes the dehydration of short chain beta-hydroxyacyl-ACPs and long chain saturated and unsaturated beta-hydroxyacyl-ACPs. This chain is 3-hydroxyacyl-[acyl-carrier-protein] dehydratase FabZ, found in Ruminiclostridium cellulolyticum (strain ATCC 35319 / DSM 5812 / JCM 6584 / H10) (Clostridium cellulolyticum).